Here is a 414-residue protein sequence, read N- to C-terminus: Dihydroorotase (414 aa).

Residues His-56 and His-58 each coordinate Zn(2+). Substrate contacts are provided by residues 58–60 and Asn-90; that span reads HFR. 4 residues coordinate Zn(2+): Lys-138, His-171, His-219, and Asp-280. Lys-138 is modified (N6-carboxylysine). Residue Asp-280 is part of the active site. Residue His-284 participates in substrate binding.

The protein belongs to the metallo-dependent hydrolases superfamily. DHOase family. Class I DHOase subfamily. It depends on Zn(2+) as a cofactor.

The catalysed reaction is (S)-dihydroorotate + H2O = N-carbamoyl-L-aspartate + H(+). Its pathway is pyrimidine metabolism; UMP biosynthesis via de novo pathway; (S)-dihydroorotate from bicarbonate: step 3/3. Functionally, catalyzes the reversible cyclization of carbamoyl aspartate to dihydroorotate. The chain is Dihydroorotase from Thermoplasma acidophilum (strain ATCC 25905 / DSM 1728 / JCM 9062 / NBRC 15155 / AMRC-C165).